The primary structure comprises 331 residues: Small ribosomal subunit protein uS2 (331 aa).

It belongs to the universal ribosomal protein uS2 family.

This is Small ribosomal subunit protein uS2 from Bradyrhizobium diazoefficiens (strain JCM 10833 / BCRC 13528 / IAM 13628 / NBRC 14792 / USDA 110).